We begin with the raw amino-acid sequence, 112 residues long: Large ribosomal subunit protein uL24 (112 aa).

Belongs to the universal ribosomal protein uL24 family. In terms of assembly, part of the 50S ribosomal subunit.

Its function is as follows. One of two assembly initiator proteins, it binds directly to the 5'-end of the 23S rRNA, where it nucleates assembly of the 50S subunit. Functionally, one of the proteins that surrounds the polypeptide exit tunnel on the outside of the subunit. This Desulfitobacterium hafniense (strain Y51) protein is Large ribosomal subunit protein uL24.